We begin with the raw amino-acid sequence, 412 residues long: MSNENSAVTKHAGVKKVVLAYSGGLDTSAIIPWLKETYDDCEIIAFCADVGQGDAELEGLYEKAIASGASECHIVDLKEELVADYIYPTIATGAIYEGTYLLGTSMARPIIAKAQVEVARKVGADAVCHGCTGKGNDQVRFEGCFAALAPDLKVIAPWREWEMVSREDLLDYLAERNIATSASATKIYSRDANAWHISHEGGELEDPWNEPSKGVWTMTVAPEDAPNQPEYVALELEQGKITKVNGEALSPYNALMLLNEVAGAHGVGRIDITENRLVGMKSRGCYETPGGTVMFAALRAIEELVLDKTSREWREQIGTKMAHLVYDGRWFTPLCESLLGASKPLADLINGEVVVKLYKGQASVVKKRSPNSLYSEAFATFGADDVYNQKDAEGFIRLYSLSSRIRALNNQK.

ATP-binding positions include 20-28 (AYSGGLDTS) and alanine 48. 2 residues coordinate L-citrulline: tyrosine 100 and serine 105. Position 130 (glycine 130) interacts with ATP. 3 residues coordinate L-aspartate: threonine 132, asparagine 136, and aspartate 137. Asparagine 136 contacts L-citrulline. 5 residues coordinate L-citrulline: arginine 140, serine 189, serine 198, glutamate 274, and tyrosine 286.

Belongs to the argininosuccinate synthase family. Type 1 subfamily. As to quaternary structure, homotetramer.

Its subcellular location is the cytoplasm. It carries out the reaction L-citrulline + L-aspartate + ATP = 2-(N(omega)-L-arginino)succinate + AMP + diphosphate + H(+). It participates in amino-acid biosynthesis; L-arginine biosynthesis; L-arginine from L-ornithine and carbamoyl phosphate: step 2/3. This is Argininosuccinate synthase from Shewanella halifaxensis (strain HAW-EB4).